The sequence spans 852 residues: DNA double-strand break repair Rad50 ATPase (852 aa).

ATP contacts are provided by Asn-32, Gly-33, Ala-34, Gly-35, Lys-36, Ser-37, Ser-38, Arg-53, Tyr-54, Asp-59, Val-61, and Arg-63. Ser-37 is a Mg(2+) binding site. Gln-142 serves as a coordination point for Mg(2+). 2 coiled-coil regions span residues 155-345 and 389-427; these read EITE…EELD and LLSI…QIAS. A Zinc-hook domain is found at 389-488; sequence LLSIEKTENE…SLSSLIEDLL (100 aa). Zn(2+) is bound by residues Cys-435 and Cys-438. 2 coiled-coil regions span residues 460–488 and 534–711; these read DQKR…EDLL and KIEE…LFDK. Asp-797 lines the Mg(2+) pocket.

This sequence belongs to the SMC family. RAD50 subfamily. In terms of assembly, homodimer. Forms a complex with Mre11. Requires Zn(2+) as cofactor.

The catalysed reaction is ATP + H2O = ADP + phosphate + H(+). Functionally, involved in DNA double-strand break repair (DSBR). The Rad50/Mre11 complex possesses single-strand endonuclease activity and ATP-dependent double-strand-specific 3'-5' exonuclease activity. Rad50 provides an ATP-dependent control of Mre11 by positioning DNA ends into the Mre11 active site: ATP-binding induces a large structural change from an open form with accessible Mre11 nuclease sites into a closed form. In Thermotoga maritima (strain ATCC 43589 / DSM 3109 / JCM 10099 / NBRC 100826 / MSB8), this protein is DNA double-strand break repair Rad50 ATPase.